A 206-amino-acid chain; its full sequence is BAG family molecular chaperone regulator 1B (206 aa).

Positions 122-202 (IEAYIDELQQ…QYLSKLDSTK (81 aa)) constitute a BAG domain. Ser-144 carries the phosphoserine modification.

As to quaternary structure, binds to the ATPase domain of HSP70/HSC chaperones.

Functionally, inhibits the chaperone activity of HSP70/HSC70 by promoting substrate release. In Schizosaccharomyces pombe (strain 972 / ATCC 24843) (Fission yeast), this protein is BAG family molecular chaperone regulator 1B (bag102).